A 574-amino-acid polypeptide reads, in one-letter code: Phenylalanine--tRNA ligase beta subunit (574 aa).

The 76-residue stretch at 278–353 (LTPKEFEVEL…IAYGYNEIEP (76 aa)) folds into the B5 domain. Residues Asp331, Asp337, Glu340, and Asp341 each contribute to the Mg(2+) site.

This sequence belongs to the phenylalanyl-tRNA synthetase beta subunit family. Type 2 subfamily. As to quaternary structure, tetramer of two alpha and two beta subunits. Mg(2+) is required as a cofactor.

The protein localises to the cytoplasm. It carries out the reaction tRNA(Phe) + L-phenylalanine + ATP = L-phenylalanyl-tRNA(Phe) + AMP + diphosphate + H(+). In Thermococcus kodakarensis (strain ATCC BAA-918 / JCM 12380 / KOD1) (Pyrococcus kodakaraensis (strain KOD1)), this protein is Phenylalanine--tRNA ligase beta subunit.